We begin with the raw amino-acid sequence, 650 residues long: Acetoacetyl-coenzyme A synthetase (650 aa).

Tyr199–Lys202 is a binding site for CoA. Residues Gly392–Pro394, Asp504, Arg519, and Arg530 each bind ATP. Residue Val546 participates in Mg(2+) binding. Arg587 contributes to the CoA binding site. Lys612 bears the N6-acetyllysine mark.

The protein belongs to the ATP-dependent AMP-binding enzyme family. Mg(2+) serves as cofactor. Post-translationally, acetylated. Deacetylation by the SIR2-homolog deacetylase activates the enzyme.

It catalyses the reaction acetoacetate + ATP + CoA = acetoacetyl-CoA + AMP + diphosphate. The protein operates within biopolymer metabolism; poly-(R)-3-hydroxybutanoate degradation. Its function is as follows. Catalyzes the conversion of acetoacetate into acetoacetyl-CoA. Is involved in poly-3-hydroxybutyrate (PHB) degradation, which allows growth of R.meliloti on PHB cycle intermediates. This chain is Acetoacetyl-coenzyme A synthetase, found in Rhizobium meliloti (strain 1021) (Ensifer meliloti).